A 341-amino-acid polypeptide reads, in one-letter code: Glucokinase (341 aa).

G18–T23 lines the ATP pocket.

This sequence belongs to the bacterial glucokinase family.

It is found in the cytoplasm. The enzyme catalyses D-glucose + ATP = D-glucose 6-phosphate + ADP + H(+). This is Glucokinase from Rhizobium etli (strain ATCC 51251 / DSM 11541 / JCM 21823 / NBRC 15573 / CFN 42).